A 159-amino-acid polypeptide reads, in one-letter code: Globin D, coelomic (159 aa).

Residue Gly-2 is modified to N-acetylglycine. In terms of domain architecture, Globin spans 12-158; the sequence is DLTPAEKDLI…VQGVLITKHA (147 aa). Residues His-74 and His-105 each contribute to the heme b site.

It belongs to the globin family. As to quaternary structure, homodimer.

This Molpadia arenicola (Sea cucumber) protein is Globin D, coelomic.